A 611-amino-acid polypeptide reads, in one-letter code: Rho-related BTB domain-containing protein 3 (611 aa).

Residues 1 to 175 (MSIHIVALGN…KELGATYLEL (175 aa)) form a rho-like region. BTB domains lie at 254-356 (VDVV…QWEE) and 420-487 (ADVV…CPAG). Positions 420 to 611 (ADVVFEIQGT…HSRKCRCLVM (192 aa)) are interaction with Rab9.

Interacts with RAB9A and RAB9B (at lower level compared to RAB9A-binding). Interacts with M6PRBP1/TIP47. In terms of tissue distribution, ubiquitous. Highly expressed in neural and cardiac tissues, pancreas, placenta and testis.

The protein localises to the golgi apparatus. In terms of biological role, rab9-regulated ATPase required for endosome to Golgi transport. Involved in transport vesicle docking at the Golgi complex, possibly by participating in release M6PRBP1/TIP47 from vesicles to permit their efficient docking and fusion at the Golgi. Specifically binds Rab9, but not other Rab proteins. Has low intrinsic ATPase activity due to autoinhibition, which is relieved by Rab9. This Homo sapiens (Human) protein is Rho-related BTB domain-containing protein 3 (RHOBTB3).